The following is a 487-amino-acid chain: 2-succinylbenzoate--CoA ligase (487 aa).

This sequence belongs to the ATP-dependent AMP-binding enzyme family. MenE subfamily.

The catalysed reaction is 2-succinylbenzoate + ATP + CoA = 2-succinylbenzoyl-CoA + AMP + diphosphate. It participates in quinol/quinone metabolism; 1,4-dihydroxy-2-naphthoate biosynthesis; 1,4-dihydroxy-2-naphthoate from chorismate: step 5/7. Its pathway is quinol/quinone metabolism; menaquinone biosynthesis. In terms of biological role, converts 2-succinylbenzoate (OSB) to 2-succinylbenzoyl-CoA (OSB-CoA). The chain is 2-succinylbenzoate--CoA ligase from Bacillus velezensis (strain DSM 23117 / BGSC 10A6 / LMG 26770 / FZB42) (Bacillus amyloliquefaciens subsp. plantarum).